A 685-amino-acid polypeptide reads, in one-letter code: Polyphosphate kinase (685 aa).

Asn-45 is a binding site for ATP. Positions 375 and 405 each coordinate Mg(2+). The active-site Phosphohistidine intermediate is His-435. The ATP site is built by Tyr-468, Arg-564, and His-592.

This sequence belongs to the polyphosphate kinase 1 (PPK1) family. Mg(2+) serves as cofactor. Post-translationally, an intermediate of this reaction is the autophosphorylated ppk in which a phosphate is covalently linked to a histidine residue through a N-P bond.

It carries out the reaction [phosphate](n) + ATP = [phosphate](n+1) + ADP. In terms of biological role, catalyzes the reversible transfer of the terminal phosphate of ATP to form a long-chain polyphosphate (polyP). This chain is Polyphosphate kinase, found in Neisseria meningitidis serogroup B (strain ATCC BAA-335 / MC58).